A 237-amino-acid polypeptide reads, in one-letter code: Ribonuclease PH (237 aa).

Residues Arg-86 and 124 to 126 (GTR) contribute to the phosphate site.

Belongs to the RNase PH family. As to quaternary structure, homohexameric ring arranged as a trimer of dimers.

The catalysed reaction is tRNA(n+1) + phosphate = tRNA(n) + a ribonucleoside 5'-diphosphate. In terms of biological role, phosphorolytic 3'-5' exoribonuclease that plays an important role in tRNA 3'-end maturation. Removes nucleotide residues following the 3'-CCA terminus of tRNAs; can also add nucleotides to the ends of RNA molecules by using nucleoside diphosphates as substrates, but this may not be physiologically important. Probably plays a role in initiation of 16S rRNA degradation (leading to ribosome degradation) during starvation. This Pseudoalteromonas translucida (strain TAC 125) protein is Ribonuclease PH.